We begin with the raw amino-acid sequence, 301 residues long: MPRAHDDNWDLASSVGATATMVAAGRALATKDPRGLINDPFAEPLVRAVGLDFFTKLIDGELDIATTGNLSPGRAQAMIDGIAVRTKYFDDYFRTATDGGVRQVVILAAGLDARAYRLPWPAGTVVYEIDQPQVIDFKTTTLAGIGAKPTAIRRTVYIDLRADWPAALQAAGLDSTAPTAWLAEGMLIYLPPDPRTGCSTTAPNSVLRAARSLPNLSRALWISTQAGYEKWRIRFASTAWTSTWRRWCIPANAATSSTTCAPRAGTLRAQCGPTYSGAMVCPFPPHTTTIRSAKSSSSAVV.

Residues Asp130 and 159-160 (DL) contribute to the S-adenosyl-L-methionine site.

The protein belongs to the UPF0677 family.

Exhibits S-adenosyl-L-methionine-dependent methyltransferase activity. The polypeptide is Putative S-adenosyl-L-methionine-dependent methyltransferase BCG_0775c (Mycobacterium bovis (strain BCG / Pasteur 1173P2)).